A 276-amino-acid polypeptide reads, in one-letter code: Elongation factor Ts, mitochondrial (276 aa).

The protein belongs to the EF-Ts family.

The protein resides in the mitochondrion. Associates with the EF-Tu.GDP complex and induces the exchange of GDP to GTP. It remains bound to the aminoacyl-tRNA.EF-Tu.GTP complex up to the GTP hydrolysis stage on the ribosome. This is Elongation factor Ts, mitochondrial from Leishmania braziliensis.